Reading from the N-terminus, the 270-residue chain is ATP synthase subunit b 1 (270 aa).

Residues 2-22 (LIDWFTVIAQLINFLVLVWLL) traverse the membrane as a helical segment.

It belongs to the ATPase B chain family. In terms of assembly, F-type ATPases have 2 components, F(1) - the catalytic core - and F(0) - the membrane proton channel. F(1) has five subunits: alpha(3), beta(3), gamma(1), delta(1), epsilon(1). F(0) has three main subunits: a(1), b(2) and c(10-14). The alpha and beta chains form an alternating ring which encloses part of the gamma chain. F(1) is attached to F(0) by a central stalk formed by the gamma and epsilon chains, while a peripheral stalk is formed by the delta and b chains.

It localises to the cell inner membrane. Its function is as follows. F(1)F(0) ATP synthase produces ATP from ADP in the presence of a proton or sodium gradient. F-type ATPases consist of two structural domains, F(1) containing the extramembraneous catalytic core and F(0) containing the membrane proton channel, linked together by a central stalk and a peripheral stalk. During catalysis, ATP synthesis in the catalytic domain of F(1) is coupled via a rotary mechanism of the central stalk subunits to proton translocation. Component of the F(0) channel, it forms part of the peripheral stalk, linking F(1) to F(0). The protein is ATP synthase subunit b 1 of Marinomonas sp. (strain MWYL1).